A 147-amino-acid polypeptide reads, in one-letter code: Large ribosomal subunit protein uL13 (147 aa).

It belongs to the universal ribosomal protein uL13 family. In terms of assembly, part of the 50S ribosomal subunit.

Its function is as follows. This protein is one of the early assembly proteins of the 50S ribosomal subunit, although it is not seen to bind rRNA by itself. It is important during the early stages of 50S assembly. The sequence is that of Large ribosomal subunit protein uL13 from Ligilactobacillus salivarius (strain UCC118) (Lactobacillus salivarius).